Here is a 374-residue protein sequence, read N- to C-terminus: Isopentenyl-diphosphate delta-isomerase (374 aa).

13 to 14 (RK) is a binding site for substrate. FMN is bound by residues 71-73 (GMT), serine 104, and asparagine 132. Substrate is bound at residue 104-106 (SQR). Glutamine 171 provides a ligand contact to substrate. Glutamate 172 is a Mg(2+) binding site. FMN is bound by residues lysine 203, threonine 233, 282-284 (GMR), and 303-304 (AL).

Belongs to the IPP isomerase type 2 family. As to quaternary structure, homooctamer. Dimer of tetramers. FMN serves as cofactor. NADPH is required as a cofactor. Requires Mg(2+) as cofactor.

It localises to the cytoplasm. It catalyses the reaction isopentenyl diphosphate = dimethylallyl diphosphate. Functionally, involved in the biosynthesis of isoprenoids. Catalyzes the 1,3-allylic rearrangement of the homoallylic substrate isopentenyl (IPP) to its allylic isomer, dimethylallyl diphosphate (DMAPP). This chain is Isopentenyl-diphosphate delta-isomerase, found in Thermococcus kodakarensis (strain ATCC BAA-918 / JCM 12380 / KOD1) (Pyrococcus kodakaraensis (strain KOD1)).